The chain runs to 711 residues: Polyribonucleotide nucleotidyltransferase (711 aa).

Positions 486 and 492 each coordinate Mg(2+). Positions 553–612 constitute a KH domain; sequence PRIHTIKINPDKIKDVIGKGGSVIRALTEETGTTIEIEDDGTVKIAATDGEKAKHAIRRI. The 69-residue stretch at 622 to 690 folds into the S1 motif domain; that stretch reads GRVYNGKVTR…RQGRIRLSIK (69 aa). Residues 689-711 are disordered; that stretch reads IKEATEQSQPAAAPEAPAAEQGE. Low complexity predominate over residues 694-711; it reads EQSQPAAAPEAPAAEQGE.

The protein belongs to the polyribonucleotide nucleotidyltransferase family. Component of the RNA degradosome, which is a multiprotein complex involved in RNA processing and mRNA degradation. Mg(2+) is required as a cofactor.

The protein localises to the cytoplasm. The enzyme catalyses RNA(n+1) + phosphate = RNA(n) + a ribonucleoside 5'-diphosphate. In terms of biological role, involved in mRNA degradation. Catalyzes the phosphorolysis of single-stranded polyribonucleotides processively in the 3'- to 5'-direction. This Escherichia coli O6:K15:H31 (strain 536 / UPEC) protein is Polyribonucleotide nucleotidyltransferase.